Here is a 625-residue protein sequence, read N- to C-terminus: DNA-directed RNA polymerase subunit gamma (625 aa).

Residues Cys-71, Cys-73, Cys-86, and Cys-89 each contribute to the Zn(2+) site. Positions 467, 469, and 471 each coordinate Mg(2+).

The protein belongs to the RNA polymerase beta' chain family. RpoC1 subfamily. As to quaternary structure, in cyanobacteria the RNAP catalytic core is composed of 2 alpha, 1 beta, 1 beta', 1 gamma and 1 omega subunit. When a sigma factor is associated with the core the holoenzyme is formed, which can initiate transcription. The cofactor is Mg(2+). Zn(2+) is required as a cofactor.

It carries out the reaction RNA(n) + a ribonucleoside 5'-triphosphate = RNA(n+1) + diphosphate. Its function is as follows. DNA-dependent RNA polymerase catalyzes the transcription of DNA into RNA using the four ribonucleoside triphosphates as substrates. The chain is DNA-directed RNA polymerase subunit gamma from Gloeothece citriformis (strain PCC 7424) (Cyanothece sp. (strain PCC 7424)).